Reading from the N-terminus, the 73-residue chain is UPF0154 protein BCG9842_B1526 (73 aa).

A helical transmembrane segment spans residues 3-23; that stretch reads IWLGILVGVVALVAGVALGFF.

The protein belongs to the UPF0154 family.

Its subcellular location is the cell membrane. The polypeptide is UPF0154 protein BCG9842_B1526 (Bacillus cereus (strain G9842)).